The sequence spans 75 residues: Putative membrane protein insertion efficiency factor (75 aa).

This sequence belongs to the UPF0161 family.

The protein localises to the cell membrane. Functionally, could be involved in insertion of integral membrane proteins into the membrane. This chain is Putative membrane protein insertion efficiency factor (ytjA), found in Bacillus subtilis (strain 168).